The primary structure comprises 416 residues: Serine hydroxymethyltransferase (416 aa).

Residues L121 and 125 to 127 (GHL) each bind (6S)-5,6,7,8-tetrahydrofolate. An N6-(pyridoxal phosphate)lysine modification is found at K229.

This sequence belongs to the SHMT family. Homodimer. It depends on pyridoxal 5'-phosphate as a cofactor.

It is found in the cytoplasm. It catalyses the reaction (6R)-5,10-methylene-5,6,7,8-tetrahydrofolate + glycine + H2O = (6S)-5,6,7,8-tetrahydrofolate + L-serine. It participates in one-carbon metabolism; tetrahydrofolate interconversion. The protein operates within amino-acid biosynthesis; glycine biosynthesis; glycine from L-serine: step 1/1. Its function is as follows. Catalyzes the reversible interconversion of serine and glycine with tetrahydrofolate (THF) serving as the one-carbon carrier. This reaction serves as the major source of one-carbon groups required for the biosynthesis of purines, thymidylate, methionine, and other important biomolecules. Also exhibits THF-independent aldolase activity toward beta-hydroxyamino acids, producing glycine and aldehydes, via a retro-aldol mechanism. This Neisseria meningitidis serogroup B (strain ATCC BAA-335 / MC58) protein is Serine hydroxymethyltransferase.